Reading from the N-terminus, the 92-residue chain is Small ribosomal subunit protein uS19c (92 aa).

The protein belongs to the universal ribosomal protein uS19 family.

Its subcellular location is the plastid. The protein resides in the chloroplast. Protein S19 forms a complex with S13 that binds strongly to the 16S ribosomal RNA. The chain is Small ribosomal subunit protein uS19c (rps19) from Chlorella vulgaris (Green alga).